Here is a 492-residue protein sequence, read N- to C-terminus: Bifunctional protein GlmU (492 aa).

The pyrophosphorylase stretch occupies residues 1 to 241; sequence MTFRGDTAVV…SALVAGVNDR (241 aa). UDP-N-acetyl-alpha-D-glucosamine is bound by residues 12-15, K26, Q83, and 88-89; these read LAAG and GT. Position 114 (D114) interacts with Mg(2+). UDP-N-acetyl-alpha-D-glucosamine-binding residues include G151, E166, N181, and N239. N239 contributes to the Mg(2+) binding site. The interval 242 to 262 is linker; the sequence is VQLAQLGAELNRRIVAAHQMA. Positions 263–492 are N-acetyltransferase; sequence GVTVIDPATT…TPPPDADQTP (230 aa). Residues R344 and K362 each coordinate UDP-N-acetyl-alpha-D-glucosamine. H374 acts as the Proton acceptor in catalysis. Residues Y377 and N388 each coordinate UDP-N-acetyl-alpha-D-glucosamine. Residues A391, 397 to 398, and A434 each bind acetyl-CoA; that span reads NY. Residues 451–492 are disordered; sequence GGPQRNIEDWVQQKRPGTPSAEAARKASAEQSTPPPDADQTP. Residues 483–492 show a composition bias toward pro residues; sequence TPPPDADQTP.

It in the N-terminal section; belongs to the N-acetylglucosamine-1-phosphate uridyltransferase family. The protein in the C-terminal section; belongs to the transferase hexapeptide repeat family. In terms of assembly, homotrimer. Requires Mg(2+) as cofactor.

It is found in the cytoplasm. The enzyme catalyses alpha-D-glucosamine 1-phosphate + acetyl-CoA = N-acetyl-alpha-D-glucosamine 1-phosphate + CoA + H(+). The catalysed reaction is N-acetyl-alpha-D-glucosamine 1-phosphate + UTP + H(+) = UDP-N-acetyl-alpha-D-glucosamine + diphosphate. It participates in nucleotide-sugar biosynthesis; UDP-N-acetyl-alpha-D-glucosamine biosynthesis; N-acetyl-alpha-D-glucosamine 1-phosphate from alpha-D-glucosamine 6-phosphate (route II): step 2/2. Its pathway is nucleotide-sugar biosynthesis; UDP-N-acetyl-alpha-D-glucosamine biosynthesis; UDP-N-acetyl-alpha-D-glucosamine from N-acetyl-alpha-D-glucosamine 1-phosphate: step 1/1. The protein operates within bacterial outer membrane biogenesis; LPS lipid A biosynthesis. In terms of biological role, catalyzes the last two sequential reactions in the de novo biosynthetic pathway for UDP-N-acetylglucosamine (UDP-GlcNAc). The C-terminal domain catalyzes the transfer of acetyl group from acetyl coenzyme A to glucosamine-1-phosphate (GlcN-1-P) to produce N-acetylglucosamine-1-phosphate (GlcNAc-1-P), which is converted into UDP-GlcNAc by the transfer of uridine 5-monophosphate (from uridine 5-triphosphate), a reaction catalyzed by the N-terminal domain. In Mycobacterium marinum (strain ATCC BAA-535 / M), this protein is Bifunctional protein GlmU.